A 387-amino-acid polypeptide reads, in one-letter code: Pepsin A-5 (387 aa).

The first 15 residues, 1-15, serve as a signal peptide directing secretion; the sequence is MKWLWVLGLVALSEC. The propeptide at 16 to 62 is activation peptide; sequence LVKIPLMKIKSMRENLRESQVLKDYLEKYPRSRAHVLLEQRRNPAVT. The Peptidase A1 domain maps to 74–384; sequence YIGIISIGTP…DRANNRIGLA (311 aa). Aspartate 92 is a catalytic residue. Cystine bridges form between cysteine 105–cysteine 110 and cysteine 266–cysteine 270. The active site involves aspartate 275. Cysteines 309 and 343 form a disulfide.

This sequence belongs to the peptidase A1 family. In terms of tissue distribution, expressed in glandular chief cells of the neonatal stomach. Expressed in yolk sacs of the placenta (at protein level).

The protein localises to the secreted. The catalysed reaction is Preferential cleavage: hydrophobic, preferably aromatic, residues in P1 and P1' positions. Cleaves 1-Phe-|-Val-2, 4-Gln-|-His-5, 13-Glu-|-Ala-14, 14-Ala-|-Leu-15, 15-Leu-|-Tyr-16, 16-Tyr-|-Leu-17, 23-Gly-|-Phe-24, 24-Phe-|-Phe-25 and 25-Phe-|-Tyr-26 bonds in the B chain of insulin.. Its activity is regulated as follows. Inhibited by pepstatin A. Its function is as follows. Shows particularly broad specificity; although bonds involving phenylalanine and leucine are preferred, many others are also cleaved to some extent. May play a role as a specialized neonatal digestive enzyme. This is Pepsin A-5 from Mus musculus (Mouse).